Reading from the N-terminus, the 196-residue chain is Probable inactive nicotinamidase At3g16190 (196 aa).

Belongs to the isochorismatase family.

In terms of biological role, does not possess nicotinamidase activity in vitro. This Arabidopsis thaliana (Mouse-ear cress) protein is Probable inactive nicotinamidase At3g16190.